Here is a 264-residue protein sequence, read N- to C-terminus: AA9 family lytic polysaccharide monooxygenase A (264 aa).

The first 18 residues, 1 to 18, serve as a signal peptide directing secretion; that stretch reads MHFAALAILSSLVASAAA. His19 is a Cu(2+) binding site. Residues Asn51 and Asn75 are each glycosylated (N-linked (GlcNAc...) asparagine). A disulfide bond links Cys59 and Cys182. His96 contacts Cu(2+). Asn110 carries an N-linked (GlcNAc...) asparagine glycan. Position 162 (His162) interacts with O2. Tyr179 contributes to the Cu(2+) binding site. Asn218 and Asn251 each carry an N-linked (GlcNAc...) asparagine glycan.

Belongs to the polysaccharide monooxygenase AA9 family. Requires Cu(2+) as cofactor.

The protein localises to the secreted. The catalysed reaction is [(1-&gt;4)-beta-D-glucosyl]n+m + reduced acceptor + O2 = 4-dehydro-beta-D-glucosyl-[(1-&gt;4)-beta-D-glucosyl]n-1 + [(1-&gt;4)-beta-D-glucosyl]m + acceptor + H2O.. Functionally, lytic polysaccharide monooxygenase (LPMO) that depolymerizes crystalline and amorphous polysaccharides via the oxidation of scissile alpha- or beta-(1-4)-glycosidic bonds, yielding C4 oxidation products. Catalysis by LPMOs requires the reduction of the active-site copper from Cu(II) to Cu(I) by a reducing agent and H(2)O(2) or O(2) as a cosubstrate. Active on cellulose and cello-oligosaccharides, as well as plant cell wall-derived hemicellulosic polysaccharides. Also active on cello-oligosaccharides such as cellohexaose, cellopentaose or cellotetraose. The sequence is that of AA9 family lytic polysaccharide monooxygenase A from Phanerochaete carnosa (strain HHB-10118-sp) (White-rot fungus).